Consider the following 110-residue polypeptide: Ig kappa chain V region 3547 (110 aa).

The framework-1 stretch occupies residues 1–23 (AYDMTQTPSSVSAAVGGTVTINC). Positions 24–34 (QASEDISANLA) are complementarity-determining-1. Positions 35–49 (WYQQKPGQPPKLLIY) are framework-2. The interval 50-56 (AASDLAS) is complementarity-determining-2. The segment at 57-88 (GVPSRFKGSGSGTEYTLTISGVQCADAATYYC) is framework-3. The tract at residues 89 to 99 (QSADYSGSAVT) is complementarity-determining-3. The segment at 100–109 (FGGGTEVVVK) is framework-4.

The polypeptide is Ig kappa chain V region 3547 (Oryctolagus cuniculus (Rabbit)).